Consider the following 636-residue polypeptide: Zinc finger protein 90 (636 aa).

The KRAB domain maps to 14-85 (VTFKDVAVNF…EKEIQRPFCP (72 aa)). 7 consecutive C2H2-type zinc fingers follow at residues 208–230 (YKCD…EKIH), 250–272 (HECA…QRIH), 278–300 (FECN…ENAH), 306–328 (YQCS…QRIH), 334–356 (YRCN…EVTH), 362–384 (FQCK…ERTH), and 390–412 (FECS…MRIH). Residues 227–247 (EKIHKGDPYSNGTDQGAQSGR) are disordered. Lys444 is covalently cross-linked (Glycyl lysine isopeptide (Lys-Gly) (interchain with G-Cter in SUMO2)). 6 consecutive C2H2-type zinc fingers follow at residues 446–468 (YHCN…QRLH), 494–516 (YQCN…HRIH), 522–544 (YECN…ERTH), 550–572 (YECI…ERTH), 578–600 (YECN…QRTH), and 606–628 (YACK…HRVH).

Belongs to the krueppel C2H2-type zinc-finger protein family. As to quaternary structure, interacts (via N- and C-termini) with REST (via zinc-finger DNA-binding domain); the interaction inhibits REST repressor activity. As to expression, brain, spleen, thymus, and testis. Expressed in heart.

The protein localises to the nucleus. In terms of biological role, inhibits the transcriptional repressor activity of REST by inhibiting its binding to DNA, thereby derepressing transcription of REST target genes. In Mus musculus (Mouse), this protein is Zinc finger protein 90 (Zfp90).